The following is a 35-amino-acid chain: ADDDCLPRGSKCLGENKQCCKGTTCMFYANRCVGV.

Disulfide bonds link C5/C20, C12/C25, and C19/C32.

It localises to the secreted. Functionally, binds reversibly and blocks P/Q-type voltage-gated calcium channels (Cav). This is Toxin Ado1 from Agriosphodrus dohrni (Japanese assassin-bug).